A 235-amino-acid chain; its full sequence is LexA repressor (235 aa).

A DNA-binding region (H-T-H motif) is located at residues 26 to 46 (FDEMKDALDLKSKSGIHRLIT). Catalysis depends on for autocatalytic cleavage activity residues S156 and K194.

Belongs to the peptidase S24 family. As to quaternary structure, homodimer.

It carries out the reaction Hydrolysis of Ala-|-Gly bond in repressor LexA.. Its function is as follows. Represses a number of genes involved in the response to DNA damage (SOS response), including recA and lexA. In the presence of single-stranded DNA, RecA interacts with LexA causing an autocatalytic cleavage which disrupts the DNA-binding part of LexA, leading to derepression of the SOS regulon and eventually DNA repair. The sequence is that of LexA repressor from Paramagnetospirillum magneticum (strain ATCC 700264 / AMB-1) (Magnetospirillum magneticum).